We begin with the raw amino-acid sequence, 430 residues long: Type II methyltransferase M.Sau96I (430 aa).

Residues 9–63 enclose the HTH cro/C1-type domain; that stretch reads IEKMKNQNIKTQTELAEKIDISKSQLSFMFSDEYEPLKKNVIKLADVLKVSPNDI. One can recognise an SAM-dependent MTase C5-type domain in the interval 99-429; that stretch reads YNVFETFAGA…KSLVHYLNQF (331 aa). C174 is a catalytic residue.

Belongs to the class I-like SAM-binding methyltransferase superfamily. C5-methyltransferase family.

It catalyses the reaction a 2'-deoxycytidine in DNA + S-adenosyl-L-methionine = a 5-methyl-2'-deoxycytidine in DNA + S-adenosyl-L-homocysteine + H(+). Its function is as follows. A methylase that recognizes the double-stranded sequence 5'-GGNCC-3', methylates C-4 on both strands, and protects the DNA from cleavage by the Sau96I endonuclease. In Staphylococcus aureus, this protein is Type II methyltransferase M.Sau96I.